A 160-amino-acid polypeptide reads, in one-letter code: Cytochrome b6-f complex subunit 4 (160 aa).

The next 3 membrane-spanning stretches (helical) occupy residues 36–56 (LLYI…GLAV), 95–115 (LLGV…PFIE), and 131–151 (ILFL…TFPI).

Belongs to the cytochrome b family. PetD subfamily. In terms of assembly, the 4 large subunits of the cytochrome b6-f complex are cytochrome b6, subunit IV (17 kDa polypeptide, petD), cytochrome f and the Rieske protein, while the 4 small subunits are petG, petL, petM and petN. The complex functions as a dimer.

Its subcellular location is the plastid. The protein localises to the chloroplast thylakoid membrane. Functionally, component of the cytochrome b6-f complex, which mediates electron transfer between photosystem II (PSII) and photosystem I (PSI), cyclic electron flow around PSI, and state transitions. The chain is Cytochrome b6-f complex subunit 4 from Chlamydomonas moewusii (Chlamydomonas eugametos).